A 132-amino-acid polypeptide reads, in one-letter code: UPF0299 membrane protein YohJ (132 aa).

A run of 4 helical transmembrane segments spans residues 7-27, 31-51, 63-83, and 93-113; these read IIWQYIRAFVLIYACLYAGIF, LLPITIPGSIIGMLILFVLLA, GCYVLIRYMALLFVPIGVGVM, and FGPVVVSCAISTLVVFVVVSW.

The protein belongs to the UPF0299 family.

Its subcellular location is the cell inner membrane. This chain is UPF0299 membrane protein YohJ, found in Salmonella agona (strain SL483).